The chain runs to 481 residues: tRNA pseudouridine(38/39) synthase (481 aa).

At Ala2 the chain carries N-acetylalanine. Basic and acidic residues predominate over residues 29–41; it reads KKEQAKNKEDSNI. Positions 29–50 are disordered; sequence KKEQAKNKEDSNIRENSAGAGK. Asp118 acts as the Nucleophile in catalysis. Tyr195 serves as a coordination point for substrate. Phosphothreonine is present on residues Thr456, Thr466, and Thr468.

Belongs to the tRNA pseudouridine synthase TruA family.

It localises to the nucleus. It carries out the reaction uridine(38/39) in tRNA = pseudouridine(38/39) in tRNA. In terms of biological role, formation of pseudouridine at position 39 in the anticodon stem and loop of transfer RNAs. The protein is tRNA pseudouridine(38/39) synthase (PUS3) of Homo sapiens (Human).